The chain runs to 612 residues: Dihydroxy-acid dehydratase (612 aa).

Asp-81 serves as a coordination point for Mg(2+). Cys-122 lines the [2Fe-2S] cluster pocket. Positions 123 and 124 each coordinate Mg(2+). At Lys-124 the chain carries N6-carboxylysine. Cys-193 provides a ligand contact to [2Fe-2S] cluster. Glu-489 contributes to the Mg(2+) binding site. The active-site Proton acceptor is Ser-515.

Belongs to the IlvD/Edd family. In terms of assembly, homodimer. Requires [2Fe-2S] cluster as cofactor. Mg(2+) is required as a cofactor.

It catalyses the reaction (2R)-2,3-dihydroxy-3-methylbutanoate = 3-methyl-2-oxobutanoate + H2O. It carries out the reaction (2R,3R)-2,3-dihydroxy-3-methylpentanoate = (S)-3-methyl-2-oxopentanoate + H2O. Its pathway is amino-acid biosynthesis; L-isoleucine biosynthesis; L-isoleucine from 2-oxobutanoate: step 3/4. The protein operates within amino-acid biosynthesis; L-valine biosynthesis; L-valine from pyruvate: step 3/4. Functionally, functions in the biosynthesis of branched-chain amino acids. Catalyzes the dehydration of (2R,3R)-2,3-dihydroxy-3-methylpentanoate (2,3-dihydroxy-3-methylvalerate) into 2-oxo-3-methylpentanoate (2-oxo-3-methylvalerate) and of (2R)-2,3-dihydroxy-3-methylbutanoate (2,3-dihydroxyisovalerate) into 2-oxo-3-methylbutanoate (2-oxoisovalerate), the penultimate precursor to L-isoleucine and L-valine, respectively. The protein is Dihydroxy-acid dehydratase of Ectopseudomonas mendocina (strain ymp) (Pseudomonas mendocina).